The following is a 277-amino-acid chain: Putative gamma-glutamylcyclotransferase YkqA (277 aa).

8-11 serves as a coordination point for substrate; the sequence is YGTL. Residue glutamate 205 is the Proton acceptor of the active site.

This sequence belongs to the gamma-glutamylcyclotransferase family.

Functionally, putative gamma-glutamylcyclotransferase. The polypeptide is Putative gamma-glutamylcyclotransferase YkqA (ykqA) (Bacillus subtilis (strain 168)).